A 230-amino-acid chain; its full sequence is Fibrillarin-like rRNA/tRNA 2'-O-methyltransferase (230 aa).

S-adenosyl-L-methionine contacts are provided by residues 87 to 88 (TT), 105 to 106 (EF), 130 to 131 (DA), and 150 to 153 (DVAQ).

It belongs to the methyltransferase superfamily. Fibrillarin family. Interacts with nop5. Component of box C/D small ribonucleoprotein (sRNP) particles that contain rpl7ae, FlpA and nop5, plus a guide RNA.

Functionally, involved in pre-rRNA and tRNA processing. Utilizes the methyl donor S-adenosyl-L-methionine to catalyze the site-specific 2'-hydroxyl methylation of ribose moieties in rRNA and tRNA. Site specificity is provided by a guide RNA that base pairs with the substrate. Methylation occurs at a characteristic distance from the sequence involved in base pairing with the guide RNA. This chain is Fibrillarin-like rRNA/tRNA 2'-O-methyltransferase, found in Methanococcus maripaludis (strain DSM 14266 / JCM 13030 / NBRC 101832 / S2 / LL).